The chain runs to 691 residues: 1-butanol dehydrogenase (cytochrome c) (691 aa).

The first 38 residues, 1-38 (MLTTTFARKREESVPLRKGIQRALLGLSCLVLSTTSFA), serve as a signal peptide directing secretion. Position 84 (glutamate 84) interacts with pyrroloquinoline quinone. An intrachain disulfide couples cysteine 130 to cysteine 131. Pyrroloquinoline quinone contacts are provided by residues arginine 136, threonine 181, and 197–198 (GA). 2 residues coordinate Ca(2+): glutamate 199 and aspartate 322. Catalysis depends on aspartate 322, which acts as the Proton acceptor. Pyrroloquinoline quinone-binding positions include lysine 349, 408 to 409 (NW), and valine 558. The region spanning 605–684 (DDVAEGTGLY…KIKAFILGTA (80 aa)) is the Cytochrome c domain. Heme c-binding residues include cysteine 618, cysteine 621, histidine 622, and methionine 661.

Belongs to the bacterial PQQ dehydrogenase family. As to quaternary structure, monomer. Pyrroloquinoline quinone serves as cofactor. Ca(2+) is required as a cofactor. Requires heme c as cofactor.

Its subcellular location is the periplasm. The catalysed reaction is butan-1-ol + 2 Fe(III)-[cytochrome c] = butanal + 2 Fe(II)-[cytochrome c] + 2 H(+). Dehydrogenase activity is increased by ammonium ions. In terms of biological role, involved in the metabolism of butane. Could be important in the detoxification of 1-butanol. Catalyzes the oxidation of 1-butanol to butyraldehyde. Also able to use 1-propanol, 2-pentanol, propionaldehyde and butyraldehyde as substrates. In Thauera butanivorans (strain ATCC 43655 / DSM 2080 / JCM 20651 / CCUG 51053 / NBRC 103042 / IAM 12574 / Bu B1211) (Pseudomonas butanovora), this protein is 1-butanol dehydrogenase (cytochrome c).